Reading from the N-terminus, the 483-residue chain is Regulatory protein ViaA (483 aa).

The protein belongs to the ViaA family. Homodimer. Interacts with RavA.

The protein localises to the cytoplasm. Component of the RavA-ViaA chaperone complex, which may act on the membrane to optimize the function of some of the respiratory chains. ViaA stimulates the ATPase activity of RavA. The chain is Regulatory protein ViaA from Cronobacter sakazakii (strain ATCC BAA-894) (Enterobacter sakazakii).